A 174-amino-acid chain; its full sequence is Xanthine-guanine phosphoribosyltransferase (174 aa).

Residues 49-50 (RG) and 108-116 (DDLVDTGAT) contribute to the 5-phospho-alpha-D-ribose 1-diphosphate site. Aspartate 109 is a binding site for Mg(2+). Positions 112 and 155 each coordinate guanine. The xanthine site is built by aspartate 112 and isoleucine 155. GMP contacts are provided by residues 112-116 (DTGAT) and 154-155 (WI).

It belongs to the purine/pyrimidine phosphoribosyltransferase family. XGPT subfamily. Homotetramer. It depends on Mg(2+) as a cofactor.

The protein resides in the cell inner membrane. The catalysed reaction is GMP + diphosphate = guanine + 5-phospho-alpha-D-ribose 1-diphosphate. It catalyses the reaction XMP + diphosphate = xanthine + 5-phospho-alpha-D-ribose 1-diphosphate. It carries out the reaction IMP + diphosphate = hypoxanthine + 5-phospho-alpha-D-ribose 1-diphosphate. It functions in the pathway purine metabolism; GMP biosynthesis via salvage pathway; GMP from guanine: step 1/1. The protein operates within purine metabolism; XMP biosynthesis via salvage pathway; XMP from xanthine: step 1/1. Its function is as follows. Purine salvage pathway enzyme that catalyzes the transfer of the ribosyl-5-phosphate group from 5-phospho-alpha-D-ribose 1-diphosphate (PRPP) to the N9 position of the 6-oxopurines guanine and xanthine to form the corresponding ribonucleotides GMP (guanosine 5'-monophosphate) and XMP (xanthosine 5'-monophosphate), with the release of PPi. To a lesser extent, also acts on hypoxanthine. The sequence is that of Xanthine-guanine phosphoribosyltransferase from Rhodopseudomonas palustris (strain BisB18).